We begin with the raw amino-acid sequence, 761 residues long: BMP/retinoic acid-inducible neural-specific protein 1 (761 aa).

Residues 1–22 (MNWRLVEFLYLLFIWDHILVQP) form the signal peptide. In terms of domain architecture, MACPF spans 68 to 251 (RYKIYREFAR…FVQSALSYIM (184 aa)). N-linked (GlcNAc...) asparagine glycosylation is found at asparagine 156, asparagine 433, asparagine 443, asparagine 553, asparagine 599, asparagine 631, and asparagine 677.

The protein belongs to the BRINP family.

The protein localises to the cytoplasm. Its function is as follows. Plays a role in neurogenesis and brain development. May suppress cell cycle progression in postmitotic neurons by inhibiting G1/S transition. The sequence is that of BMP/retinoic acid-inducible neural-specific protein 1 (BRINP1) from Gallus gallus (Chicken).